The following is a 419-amino-acid chain: 2-amino-3-ketobutyrate coenzyme A ligase, mitochondrial (419 aa).

The N-terminal 21 residues, 1-21 (MWAGRVLHAALSRAPRESRAQ), are a transit peptide targeting the mitochondrion. Lysine 45 carries the N6-acetyllysine; alternate modification. Lysine 45 is modified (N6-succinyllysine; alternate). Residue 134–135 (CF) coordinates pyridoxal 5'-phosphate. Substrate is bound at residue histidine 159. The residue at position 187 (lysine 187) is an N6-acetyllysine; alternate. The residue at position 187 (lysine 187) is an N6-succinyllysine; alternate. Pyridoxal 5'-phosphate-binding positions include serine 206, 231 to 234 (DESH), 262 to 265 (TLGK), and 295 to 296 (SN). N6-(pyridoxal phosphate)lysine is present on lysine 265. An N6-succinyllysine mark is found at lysine 326 and lysine 368. Position 383 is an N6-acetyllysine; alternate (lysine 383). Residue lysine 383 is modified to N6-succinyllysine; alternate. A substrate-binding site is contributed by arginine 389.

This sequence belongs to the class-II pyridoxal-phosphate-dependent aminotransferase family. The cofactor is pyridoxal 5'-phosphate.

It is found in the mitochondrion. The protein resides in the nucleus. The catalysed reaction is glycine + acetyl-CoA = (2S)-2-amino-3-oxobutanoate + CoA. It functions in the pathway amino-acid degradation; L-threonine degradation via oxydo-reductase pathway; glycine from L-threonine: step 2/2. Pyridoxal phosphate (PLP) dependent enzyme, which catalyzes the cleavage of 2-amino-3-oxobutanoate to glycine and acetyl-CoA. Catalyzes the second reaction step on the main metabolic degradation pathway for L-threonine. In Bos taurus (Bovine), this protein is 2-amino-3-ketobutyrate coenzyme A ligase, mitochondrial (GCAT).